A 233-amino-acid polypeptide reads, in one-letter code: Lipoprotein-releasing system ATP-binding protein LolD (233 aa).

Positions 6-233 (LQCDNLCKRY…TAELSLMGAE (228 aa)) constitute an ABC transporter domain. An ATP-binding site is contributed by 42–49 (GSSGSGKS).

This sequence belongs to the ABC transporter superfamily. Lipoprotein translocase (TC 3.A.1.125) family. In terms of assembly, the complex is composed of two ATP-binding proteins (LolD) and two transmembrane proteins (LolC and LolE).

It is found in the cell inner membrane. In terms of biological role, part of the ABC transporter complex LolCDE involved in the translocation of mature outer membrane-directed lipoproteins, from the inner membrane to the periplasmic chaperone, LolA. Responsible for the formation of the LolA-lipoprotein complex in an ATP-dependent manner. The chain is Lipoprotein-releasing system ATP-binding protein LolD from Shigella flexneri.